The chain runs to 424 residues: Serine--tRNA ligase (424 aa).

231 to 233 (TAE) contributes to the L-serine binding site. Residue 262–264 (RSE) coordinates ATP. E285 serves as a coordination point for L-serine. 349–352 (EISS) is a binding site for ATP. Residue S385 participates in L-serine binding.

It belongs to the class-II aminoacyl-tRNA synthetase family. Type-1 seryl-tRNA synthetase subfamily. Homodimer. The tRNA molecule binds across the dimer.

The protein resides in the cytoplasm. The catalysed reaction is tRNA(Ser) + L-serine + ATP = L-seryl-tRNA(Ser) + AMP + diphosphate + H(+). The enzyme catalyses tRNA(Sec) + L-serine + ATP = L-seryl-tRNA(Sec) + AMP + diphosphate + H(+). Its pathway is aminoacyl-tRNA biosynthesis; selenocysteinyl-tRNA(Sec) biosynthesis; L-seryl-tRNA(Sec) from L-serine and tRNA(Sec): step 1/1. In terms of biological role, catalyzes the attachment of serine to tRNA(Ser). Is also able to aminoacylate tRNA(Sec) with serine, to form the misacylated tRNA L-seryl-tRNA(Sec), which will be further converted into selenocysteinyl-tRNA(Sec). In Bacillus pumilus (strain SAFR-032), this protein is Serine--tRNA ligase.